Consider the following 408-residue polypeptide: Sex comb on midleg-like protein 4 (408 aa).

Residues Ser55 and Ser65 each carry the phosphoserine modification. The disordered stretch occupies residues 274-338; it reads AGGPATTTSG…TRRPSSRNPS (65 aa). The span at 278–287 shows a compositional bias: polar residues; that stretch reads ATTTSGSRTN. Positions 288-306 are enriched in low complexity; that stretch reads PVPSGGSSSPGLRLPASSP. Residues 340 to 406 enclose the SAM domain; it reads WTVEDVVRFV…CYHIDKLKQA (67 aa).

Belongs to the SCM family.

The protein resides in the nucleus. In terms of biological role, putative Polycomb group (PcG) protein. PcG proteins act by forming multiprotein complexes, which are required to maintain the transcriptionally repressive state of homeotic genes throughout development. The protein is Sex comb on midleg-like protein 4 (Scml4) of Mus musculus (Mouse).